Reading from the N-terminus, the 286-residue chain is Putative type II secretion system L-type protein YghE (286 aa).

A helical transmembrane segment spans residues 136-156 (VMILPILLILVALAVERGVTL).

This sequence belongs to the GSP L family.

It localises to the cell inner membrane. Functionally, involved in a type II secretion system (T2SS, formerly general secretion pathway, GSP) for the export of folded proteins across the outer membrane. The chain is Putative type II secretion system L-type protein YghE from Escherichia coli (strain K12).